Reading from the N-terminus, the 224-residue chain is MASESDRTVPDTRSASRPLADRVEELLATGGPLPIVAAGDPVLRRGAEPYDGQLGPGLLARFVEALRLTMHAAPGVGLAAPQVGVGLRIAVIEDPAPVPEEVGAVRGRVPQPFRVLVNPSYEAVGSDRAAFFEGCLSVPGWQAVVARPARVRLTALDEHGRAVDEEFTGWPARIVQHETDHLDGMLYLDRAELRSLSSNEAMALRWSQPTPERAAAALGFALPD.

Fe cation is bound by residues Cys-135 and His-177. Glu-178 is an active-site residue. His-181 lines the Fe cation pocket.

This sequence belongs to the polypeptide deformylase family. Requires Fe(2+) as cofactor.

It carries out the reaction N-terminal N-formyl-L-methionyl-[peptide] + H2O = N-terminal L-methionyl-[peptide] + formate. In terms of biological role, removes the formyl group from the N-terminal Met of newly synthesized proteins. Requires at least a dipeptide for an efficient rate of reaction. N-terminal L-methionine is a prerequisite for activity but the enzyme has broad specificity at other positions. In Streptomyces avermitilis (strain ATCC 31267 / DSM 46492 / JCM 5070 / NBRC 14893 / NCIMB 12804 / NRRL 8165 / MA-4680), this protein is Peptide deformylase 3.